A 508-amino-acid chain; its full sequence is ATP synthase subunit alpha, chloroplastic (508 aa).

170 to 177 lines the ATP pocket; sequence GDRQTGKT.

The protein belongs to the ATPase alpha/beta chains family. F-type ATPases have 2 components, CF(1) - the catalytic core - and CF(0) - the membrane proton channel. CF(1) has five subunits: alpha(3), beta(3), gamma(1), delta(1), epsilon(1). CF(0) has four main subunits: a, b, b' and c.

The protein localises to the plastid. The protein resides in the chloroplast thylakoid membrane. It carries out the reaction ATP + H2O + 4 H(+)(in) = ADP + phosphate + 5 H(+)(out). Functionally, produces ATP from ADP in the presence of a proton gradient across the membrane. The alpha chain is a regulatory subunit. The chain is ATP synthase subunit alpha, chloroplastic from Lactuca sativa (Garden lettuce).